A 461-amino-acid chain; its full sequence is Tol-Pal system protein TolB 2 (461 aa).

The signal sequence occupies residues 1 to 20; that stretch reads MKIRHLLLLAGLVSAPAIVA. A disordered region spans residues 28 to 47; it reads SSSAAQASGDDDGGLTGSVS.

This sequence belongs to the TolB family. The Tol-Pal system is composed of five core proteins: the inner membrane proteins TolA, TolQ and TolR, the periplasmic protein TolB and the outer membrane protein Pal. They form a network linking the inner and outer membranes and the peptidoglycan layer.

The protein resides in the periplasm. Its function is as follows. Part of the Tol-Pal system, which plays a role in outer membrane invagination during cell division and is important for maintaining outer membrane integrity. The protein is Tol-Pal system protein TolB 2 of Novosphingobium aromaticivorans (strain ATCC 700278 / DSM 12444 / CCUG 56034 / CIP 105152 / NBRC 16084 / F199).